Reading from the N-terminus, the 230-residue chain is TorCAD operon transcriptional regulatory protein TorR (230 aa).

The region spanning His4–Leu117 is the Response regulatory domain. The residue at position 53 (Asp53) is a 4-aspartylphosphate. The segment at residues Asp132–Ala227 is a DNA-binding region (ompR/PhoB-type).

Phosphorylated and dephosphorylated by TorS.

The protein localises to the cytoplasm. In terms of biological role, member of the two-component regulatory system TorS/TorR involved in the anaerobic utilization of trimethylamine-N-oxide (TMAO). Phosphorylated TorR activates the transcription of the torCAD operon by binding to four decameric boxes located in the torCAD promoter. Box1, 2 and 4 contain the DNA sequence 5'-CTGTTCATAT-3' and box3 contains the DNA sequence 5'-CCGTTCATCC-3'. Phosphorylated as well as unphosphorylated TorR negatively regulates its own expression by binding to box1 and 2. The protein is TorCAD operon transcriptional regulatory protein TorR (torR) of Escherichia coli O157:H7.